Reading from the N-terminus, the 117-residue chain is Large ribosomal subunit protein bL20 (117 aa).

The protein belongs to the bacterial ribosomal protein bL20 family.

Its function is as follows. Binds directly to 23S ribosomal RNA and is necessary for the in vitro assembly process of the 50S ribosomal subunit. It is not involved in the protein synthesizing functions of that subunit. The sequence is that of Large ribosomal subunit protein bL20 from Mycoplasma mobile (strain ATCC 43663 / 163K / NCTC 11711) (Mesomycoplasma mobile).